A 281-amino-acid chain; its full sequence is Translation initiation factor IF3-4, chloroplastic (281 aa).

The transit peptide at 1 to 51 (MAGITSTVGFNAILAGATKTVSHPVKSKLFGLRLCVPEFSIVSLSPYHHRR) directs the protein to the chloroplast. Disordered regions lie at residues 63-86 (GGGG…DDSL) and 253-281 (KVQE…TQDI). Basic and acidic residues-rich tracts occupy residues 70-79 (PGDRRGRQKE) and 253-270 (KVQE…DDKV).

It belongs to the IF-3 family. As to quaternary structure, monomer.

Its subcellular location is the plastid. It localises to the chloroplast. Its function is as follows. Chloroplast translation initiation factor that is essential for the coordination of leaf and chloroplast development. IF-3 binds to the 30S ribosomal subunit and shifts the equilibrium between 70S ribosomes and their 50S and 30S subunits in favor of the free subunits, thus enhancing the availability of 30S subunits on which protein synthesis initiation begins. The polypeptide is Translation initiation factor IF3-4, chloroplastic (Arabidopsis thaliana (Mouse-ear cress)).